Consider the following 228-residue polypeptide: UPF0758 protein CTC_02075 (228 aa).

One can recognise an MPN domain in the interval 106 to 228 (NITNPKDAAY…YISLKEKDIL (123 aa)). Residues His-177, His-179, and Asp-190 each coordinate Zn(2+). The JAMM motif motif lies at 177–190 (HNHPSGDTTPSKED).

The protein belongs to the UPF0758 family.

This Clostridium tetani (strain Massachusetts / E88) protein is UPF0758 protein CTC_02075.